The following is a 189-amino-acid chain: Protein Rex (189 aa).

A compositionally biased stretch (basic residues) spans 1–16 (MPKTRRGPRRSQRKRP). Residues 1 to 26 (MPKTRRGPRRSQRKRPPTPWPTSQGL) are disordered. The Nuclear localization signal, and RNA-binding (RxRE) motif lies at 2–18 (PKTRRGPRRSQRKRPPT). The segment at 56–70 (RPAYIVTPYWPPVQS) is homomultimerization. Residue Ser70 is modified to Phosphoserine; by host. The Nuclear export signal signature appears at 82–93 (LSAQLYSSLSLG). A disordered region spans residues 87–189 (YSSLSLGSPP…PPSPGPSCPR (103 aa)). A compositionally biased stretch (pro residues) spans 115 to 125 (IQPPTFHPPSS). A homomultimerization region spans residues 123–131 (PSSRPYANT). Thr174 carries the phosphothreonine; by host modification. At Ser177 the chain carries Phosphoserine; by host. Over residues 178-189 (FPPPSPGPSCPR) the composition is skewed to pro residues.

Belongs to the deltaretrovirus Rex protein family. In terms of assembly, homomultimer. Multimeric assembly is essential for activity and involves XPO1. Binds to human XPO1 and KPNB1. Interacts (via N-terminal nuclear localization signal) with human NPM1. Phosphorylated.

Its subcellular location is the host nucleus. It localises to the host nucleolus. It is found in the host cytoplasm. Its function is as follows. Rex escorts unspliced gag-pro-pol and singly spliced env mRNAs out of the nucleus of infected cells. These mRNAs carry a recognition sequence called Rex responsive element (RxRE or XRE) located at the 3' region of the long terminal repeat (LTR). This function is essential since most HTLV proteins are translated from unspliced or partially spliced pre-mRNAs that cannot exit the nucleus by the pathway used by fully processed cellular mRNAs. Rex itself is translated from a fully spliced mRNA that probably readily exits the nucleus. Rex's nuclear localization signal (NLS) binds directly to KPNB1/importin beta-1 without previous binding to KPNA1/importin alpha-1. KPNB1 binds to the GDP bound form of RAN (Ran-GDP) and targets Rex to the nucleus. In the nucleus, the conversion from Ran-GDP to Ran-GTP dissociates Rex from KPNB1 and allows Rex's binding to the RRE in viral pre-mRNAs. Rex multimerizes on the RRE via cooperative assembly. This multimerization is critical for its full biological activity, since it may shield the viral RNA from being spliced or down-regulated, and probably exposes Rex's nuclear export signal (NES) to the surface. Rex can then form a complex with XPO1/CRM1, RANBP3 and Ran-GTP, leading to nuclear export of the complex. Conversion from Ran-GTP to Ran-GDP mediates dissociation of the Rex/RRE/XPO1/RANBP3/RAN complex, so that Rex can return to the nucleus for a subsequent round of export. This Homo sapiens (Human) protein is Protein Rex.